A 626-amino-acid chain; its full sequence is Glucoamylase (626 aa).

Positions 1–19 (MHLVSSLLVVGAAFQAVLG) are cleaved as a signal peptide. The propeptide occupies 20–35 (LPDPLHEKRHSDIIKR). Asn-106 carries an N-linked (GlcNAc...) asparagine glycan. Trp-155 contacts substrate. Asn-206 carries an N-linked (GlcNAc...) asparagine glycan. The active-site Proton acceptor is Asp-211. The active-site Proton donor is Glu-214. The N-linked (GlcNAc...) asparagine glycan is linked to Asn-217. The CBM20 domain occupies 520–626 (CAADHEVLVT…STATLDDTWR (107 aa)).

It belongs to the glycosyl hydrolase 15 family.

The enzyme catalyses Hydrolysis of terminal (1-&gt;4)-linked alpha-D-glucose residues successively from non-reducing ends of the chains with release of beta-D-glucose.. The chain is Glucoamylase (gla-1) from Neurospora crassa (strain ATCC 24698 / 74-OR23-1A / CBS 708.71 / DSM 1257 / FGSC 987).